A 1955-amino-acid polypeptide reads, in one-letter code: Callose synthase 3 (1955 aa).

The Cytoplasmic portion of the chain corresponds to 1 to 488; it reads MSATRGGPDQ…FWHVFRSFDR (488 aa). Residues 489–509 form a helical membrane-spanning segment; it reads MWSFYILCLQAMIIMAWDGGQ. Residues 510 to 521 are Extracellular-facing; it reads PSSVFGADVFKK. Residues 522–542 traverse the membrane as a helical segment; that stretch reads VLSVFITAAIMKLGQAVLDVI. Residues 543–558 lie on the Cytoplasmic side of the membrane; the sequence is LNFKAHQSMTLHVKLR. The helical transmembrane segment at 559–579 threads the bilayer; sequence YILKVFSAAAWVIILPVTYAY. Topologically, residues 580–604 are extracellular; it reads SWKDPPAFARTIKSWFGSAMHSPSL. Residues 605-625 traverse the membrane as a helical segment; sequence FIIAVVSYLSPNMLAGVMFLF. Topologically, residues 626 to 660 are cytoplasmic; it reads PLLRRFLERSNYRIVMLMMWWSQPRLYVGRGMHES. Residues 661-681 form a helical membrane-spanning segment; sequence AFSLFKYTMFWVLLIATKLAF. The Extracellular portion of the chain corresponds to 682 to 717; the sequence is SYYIEIRPLVAPTQAIMKARVTNFQWHEFFPRAKNN. The chain crosses the membrane as a helical span at residues 718-738; that stretch reads IGVVIALWAPIILVYFMDSQI. At 739 to 1517 the chain is on the cytoplasmic side; sequence WYAIFSTLFG…FDFFRMMSCY (779 aa). A helical membrane pass occupies residues 1518–1538; it reads FTTVGFYFSTLITVLTVYIFL. Topologically, residues 1539–1566 are extracellular; it reads YGRLYLVLSGLEQGLSTQKGIRDNTPLQ. A helical transmembrane segment spans residues 1567-1587; that stretch reads IALASQSFVQIGFLMALPMLM. Residues 1588–1597 lie on the Cytoplasmic side of the membrane; the sequence is EIGLERGFRT. A helical transmembrane segment spans residues 1598–1618; that stretch reads ALSEFVLMQLQLAPVFFTFSL. Residues 1619–1661 are Extracellular-facing; it reads GTKTHYYGRTLLHGGAKYRSTGRGFVVFHAKFADNYRLYSRSH. Residues 1662–1682 form a helical membrane-spanning segment; the sequence is FVKGLEMMLLLVVYQIFGSAY. Residues 1683 to 1688 are Cytoplasmic-facing; that stretch reads RGVLAY. The helical transmembrane segment at 1689–1709 threads the bilayer; sequence LLITISMWFMVGTWLFAPFLF. Residues 1710–1761 lie on the Extracellular side of the membrane; the sequence is NPSGFEWQKIVDDWTDWNKWINNIGGIGVPAEKSWESWWEEEQEHLRYSGKR. Residues 1762 to 1782 traverse the membrane as a helical segment; that stretch reads GIVVEILLALRFFIYQYGLVY. The Cytoplasmic segment spans residues 1783-1792; sequence HLTITEKTKN. Residues 1793–1813 traverse the membrane as a helical segment; sequence FLVYGVSWLVIFLILFVMKTV. At 1814 to 1833 the chain is on the extracellular side; that stretch reads SVGRRRFSASFQLMFRLIKG. Residues 1834-1854 traverse the membrane as a helical segment; sequence LIFMTFIAIIVILITLAHMTI. At 1855 to 1856 the chain is on the cytoplasmic side; the sequence is QD. Residues 1857–1877 form a helical membrane-spanning segment; that stretch reads IIVCILAFMPTGWGMLLIAQA. The Extracellular segment spans residues 1878–1899; that stretch reads CKPVVHRAGFWGSVRTLARGYE. A helical transmembrane segment spans residues 1900-1920; that stretch reads IVMGLLLFTPVAFLAWFPFVS. At 1921 to 1955 the chain is on the cytoplasmic side; that stretch reads EFQTRMLFNQAFSRGLQISRILGGHRKDRSSRNKE.

Belongs to the glycosyltransferase 48 family.

It localises to the cell membrane. The catalysed reaction is [(1-&gt;3)-beta-D-glucosyl](n) + UDP-alpha-D-glucose = [(1-&gt;3)-beta-D-glucosyl](n+1) + UDP + H(+). Functionally, involved in callose synthesis at the forming cell plate during cytokinesis. During plant growth and development, callose is found as a transitory component of the cell plate in dividing cells, is a major component of pollen mother cell walls and pollen tubes, and is found as a structural component of plasmodesmatal canals. This chain is Callose synthase 3 (CALS3), found in Arabidopsis thaliana (Mouse-ear cress).